The following is a 509-amino-acid chain: Heat shock 70 kDa protein 14 (509 aa).

This sequence belongs to the heat shock protein 70 family. Component of ribosome-associated complex (RAC), a heterodimer composed of Hsp70/DnaK-type chaperone HSPA14 and Hsp40/DnaJ-type chaperone DNAJC2.

The protein resides in the cytoplasm. The protein localises to the cytosol. Functionally, component of the ribosome-associated complex (RAC), a complex involved in folding or maintaining nascent polypeptides in a folding-competent state. In the RAC complex, binds to the nascent polypeptide chain, while DNAJC2 stimulates its ATPase activity. In Bos taurus (Bovine), this protein is Heat shock 70 kDa protein 14 (HSPA14).